The chain runs to 507 residues: Arylsulfatase A (507 aa).

Positions 1–18 (MGAPRSLLLALAAGLAVA) are cleaved as a signal peptide. 3 residues coordinate Ca(2+): aspartate 29, aspartate 30, and cysteine 69. Cysteine 69 serves as the catalytic Nucleophile. Cysteine 69 carries the post-translational modification 3-oxoalanine (Cys). Lysine 123 provides a ligand contact to substrate. Residue histidine 125 is part of the active site. Residue serine 150 coordinates substrate. Cystine bridges form between cysteine 156/cysteine 172 and cysteine 161/cysteine 168. Residue asparagine 158 is glycosylated (N-linked (GlcNAc...) asparagine). Residue asparagine 184 is glycosylated (N-linked (GlcNAc...) asparagine). Histidine 229 contacts substrate. Ca(2+)-binding residues include aspartate 281 and asparagine 282. 4 disulfides stabilise this stretch: cysteine 300/cysteine 414, cysteine 488/cysteine 500, cysteine 489/cysteine 502, and cysteine 493/cysteine 499. Lysine 302 serves as a coordination point for substrate. N-linked (GlcNAc...) asparagine glycosylation occurs at asparagine 350.

It belongs to the sulfatase family. As to quaternary structure, homodimer at neutral pH and homooctamer at acidic pH. Exists both as a single chain of 58 kDa (component A) or as a chain of 50 kDa (component B) linked by disulfide bond(s) to a 7 kDa chain (component C). Interacts with SUMF1. The cofactor is Ca(2+). The conversion to 3-oxoalanine (also known as C-formylglycine, FGly), of a serine or cysteine residue in prokaryotes and of a cysteine residue in eukaryotes, is critical for catalytic activity. This post-translational modification is severely defective in multiple sulfatase deficiency (MSD).

Its subcellular location is the endoplasmic reticulum. It is found in the lysosome. The enzyme catalyses an N-acyl-1-beta-D-(3-O-sulfo)-galactosyl-sphing-4-enine + H2O = a beta-D-galactosyl-(1&lt;-&gt;1')-N-acylsphing-4-enine + sulfate + H(+). Inhibited by phosphate. The phosphate forms a covalent bond with the active site 3-oxoalanine. In terms of biological role, hydrolyzes cerebroside sulfate. In Homo sapiens (Human), this protein is Arylsulfatase A (ARSA).